Consider the following 318-residue polypeptide: tRNA U34 carboxymethyltransferase (318 aa).

Carboxy-S-adenosyl-L-methionine is bound by residues lysine 88, tryptophan 102, lysine 107, glycine 126, methionine 192, tyrosine 196, and arginine 311.

Belongs to the class I-like SAM-binding methyltransferase superfamily. CmoB family. In terms of assembly, homotetramer.

The catalysed reaction is carboxy-S-adenosyl-L-methionine + 5-hydroxyuridine(34) in tRNA = 5-carboxymethoxyuridine(34) in tRNA + S-adenosyl-L-homocysteine + H(+). Functionally, catalyzes carboxymethyl transfer from carboxy-S-adenosyl-L-methionine (Cx-SAM) to 5-hydroxyuridine (ho5U) to form 5-carboxymethoxyuridine (cmo5U) at position 34 in tRNAs. The protein is tRNA U34 carboxymethyltransferase of Pseudomonas fluorescens (strain SBW25).